We begin with the raw amino-acid sequence, 534 residues long: Zinc finger protein 69 homolog B (534 aa).

Glycyl lysine isopeptide (Lys-Gly) (interchain with G-Cter in SUMO2) cross-links involve residues lysine 37 and lysine 40. In terms of domain architecture, KRAB spans leucine 74 to serine 145. Glycyl lysine isopeptide (Lys-Gly) (interchain with G-Cter in SUMO2) cross-links involve residues lysine 178 and lysine 235. 9 consecutive C2H2-type zinc fingers follow at residues phenylalanine 279 to histidine 301, phenylalanine 307 to histidine 329, tyrosine 335 to histidine 357, tyrosine 363 to histidine 385, phenylalanine 391 to histidine 413, tyrosine 419 to histidine 441, tyrosine 447 to histidine 469, tyrosine 475 to histidine 497, and tyrosine 503 to histidine 525.

The protein belongs to the krueppel C2H2-type zinc-finger protein family.

It localises to the nucleus. In terms of biological role, may be involved in transcriptional regulation. Essential for Golgi structural integrity. In Homo sapiens (Human), this protein is Zinc finger protein 69 homolog B (ZFP69B).